A 143-amino-acid chain; its full sequence is Peptide methionine sulfoxide reductase MsrB (143 aa).

The MsrB domain maps to 16-139; it reads DAELRRRLTP…NSAALNFEAK (124 aa). Cys-55, Cys-58, Cys-104, and Cys-107 together coordinate Zn(2+). The active-site Nucleophile is the Cys-128.

Belongs to the MsrB Met sulfoxide reductase family. Requires Zn(2+) as cofactor.

It catalyses the reaction L-methionyl-[protein] + [thioredoxin]-disulfide + H2O = L-methionyl-(R)-S-oxide-[protein] + [thioredoxin]-dithiol. In Burkholderia mallei (strain NCTC 10229), this protein is Peptide methionine sulfoxide reductase MsrB.